We begin with the raw amino-acid sequence, 346 residues long: Phosphoribosylformylglycinamidine cyclo-ligase (346 aa).

This sequence belongs to the AIR synthase family.

The protein localises to the cytoplasm. The enzyme catalyses 2-formamido-N(1)-(5-O-phospho-beta-D-ribosyl)acetamidine + ATP = 5-amino-1-(5-phospho-beta-D-ribosyl)imidazole + ADP + phosphate + H(+). The protein operates within purine metabolism; IMP biosynthesis via de novo pathway; 5-amino-1-(5-phospho-D-ribosyl)imidazole from N(2)-formyl-N(1)-(5-phospho-D-ribosyl)glycinamide: step 2/2. This chain is Phosphoribosylformylglycinamidine cyclo-ligase, found in Bacillus thuringiensis subsp. konkukian (strain 97-27).